Reading from the N-terminus, the 301-residue chain is Putative S-adenosyl-L-methionine-dependent methyltransferase MT0851 (301 aa).

S-adenosyl-L-methionine is bound by residues aspartate 127 and 156–157; that span reads DL.

Belongs to the UPF0677 family.

Its function is as follows. Exhibits S-adenosyl-L-methionine-dependent methyltransferase activity. In Mycobacterium tuberculosis (strain CDC 1551 / Oshkosh), this protein is Putative S-adenosyl-L-methionine-dependent methyltransferase MT0851.